The sequence spans 757 residues: Mitofusin-2 (757 aa).

The Cytoplasmic portion of the chain corresponds to Met1–Val604. A part of a helix bundle domain, formed by helices from N-terminal and C-terminal regions region spans residues Lys30–Arg94. One can recognise a Dynamin-type G domain in the interval Ala93–Glu342. The G1 motif stretch occupies residues Gly103–Ser110. Residue Ser106–Thr111 coordinates GTP. Thr111 is subject to Phosphothreonine; by PINK1. The interval Thr129–Thr130 is G2 motif. The G3 motif stretch occupies residues Asp199 to Gly202. Asn258–Asp261 is a binding site for GTP. Residues Asn258–Asp261 are G4 motif. Residue Glu288 is a region of interest, G5 motif. 2 residues coordinate GTP: Ser305 and Lys307. Residues Glu359–Glu385 form a part of a helix bundle domain, formed by helices from N-terminal and C-terminal regions region. Residues Lys406–Ala435 adopt a coiled-coil conformation. Position 442 is a phosphoserine; by PINK1 (Ser442). The chain crosses the membrane as a helical span at residues Thr605 to Val625. Trp626 is a topological domain (mitochondrial intermembrane). Residues Lys627–Tyr647 form a helical membrane-spanning segment. Residues Glu648–Arg757 are Cytoplasmic-facing. A coiled-coil region spans residues Phe696 to Ala738. The tract at residues Glu722–Leu753 is part of a helix bundle domain, formed by helices from N-terminal and C-terminal regions.

It belongs to the TRAFAC class dynamin-like GTPase superfamily. Dynamin/Fzo/YdjA family. Mitofusin subfamily. As to quaternary structure, forms homomultimers and heteromultimers with MFN1. Oligomerization is essential for mitochondrion fusion. Interacts with VAT1. Interacts with STOML2; may form heterooligomers. Interacts (phosphorylated) with PRKN. Interacts with EIF2AK3. Interacts with THG1L; THG1L probably functions as a guanyl-nucleotide exchange factor/GEF, activating MFN2. In terms of processing, phosphorylated by PINK1. Ubiquitinated by non-degradative ubiquitin by PRKN, promoting mitochondrial fusion; deubiquitination by USP30 inhibits mitochondrial fusion. Ubiquitinated by HUWE1 when dietary stearate (C18:0) levels are low; ubiquitination inhibits mitochondrial fusion. In terms of tissue distribution, ubiquitous. In brain, it is more expressed than MFN1, while it is expressed at a weaker level than MFN1 in heart and testis. Expressed at high level in elongating spermatids of seminiferous tubules. Expression is markedly down-regulated in highly proliferative vascular smooth muscle cells (VSMCs) from the genetic hypertensive animal model SHR, as well as in balloon-injured Wistar Kyoto arteries.

The protein localises to the mitochondrion outer membrane. The enzyme catalyses GTP + H2O = GDP + phosphate + H(+). Functionally, mitochondrial outer membrane GTPase that mediates mitochondrial clustering and fusion. Mitochondria are highly dynamic organelles, and their morphology is determined by the equilibrium between mitochondrial fusion and fission events. Overexpression induces the formation of mitochondrial networks. Membrane clustering requires GTPase activity and may involve a major rearrangement of the coiled coil domains. Plays a central role in mitochondrial metabolism and may be associated with obesity and/or apoptosis processes. Plays an important role in the regulation of vascular smooth muscle cell proliferation. Involved in the clearance of damaged mitochondria via selective autophagy (mitophagy). Is required for PRKN recruitment to dysfunctional mitochondria. Involved in the control of unfolded protein response (UPR) upon ER stress including activation of apoptosis and autophagy during ER stress. Acts as an upstream regulator of EIF2AK3 and suppresses EIF2AK3 activation under basal conditions. The sequence is that of Mitofusin-2 (Mfn2) from Rattus norvegicus (Rat).